The sequence spans 396 residues: MAIRIKLKPGREKSLERRHPWVFSNAIHNIKGKPEAGETVDVVAHDGHWLGRGAWSPESQIQVRIWTFDREEEIDREFFARRLQRAQIGRNDLIREQGLTGYRLVAAESDGLPGITIDRYANVLVCQLLSTGADLWRDTLVELLAEQYPDCAIYERSDVDSRKKEGLLPVTGLLHGTLPEMPVIIEENGIKIAVDVIKGHKTGFYLDQRDNRAIAARFVKDKSVLNCFCYTGTFGLYAAKAGAASIENVDVSSLALATARLNMQVNGLSDDNVHYNEADVFKLLRLYRDEGKTFDVIVLDPPKFADNKAQLNGACRGYKDINMIALQLLNPGGVLLTFSCSGLMPADLFQKIVADAALDAKREIQFIERLSQASDHPIGSAFPEGFYLKGLVARAW.

The 78-residue stretch at 2-79 folds into the PUA domain; the sequence is AIRIKLKPGR…REEEIDREFF (78 aa).

This sequence belongs to the methyltransferase superfamily. RlmI family.

Its subcellular location is the cytoplasm. It catalyses the reaction cytidine(1962) in 23S rRNA + S-adenosyl-L-methionine = 5-methylcytidine(1962) in 23S rRNA + S-adenosyl-L-homocysteine + H(+). Functionally, specifically methylates the cytosine at position 1962 (m5C1962) of 23S rRNA. This chain is Ribosomal RNA large subunit methyltransferase I, found in Shewanella baltica (strain OS155 / ATCC BAA-1091).